Reading from the N-terminus, the 465-residue chain is Putative adhesin P1-like protein MPN_286 (465 aa).

3 disordered regions span residues 9–48, 59–78, and 93–167; these read GNGH…STFS, QGTL…PKWP, and WRND…LPPN. Residues 21-37 are compositionally biased toward low complexity; it reads SNSSTSGVTTQGQQSQN. Polar residues predominate over residues 38–48; sequence ASGTEPASTFS. Residues 111 to 131 show a composition bias toward low complexity; sequence TSATGSGQQGSSSGTTNSAGN. A compositionally biased stretch (basic and acidic residues) spans 135–144; the sequence is LKQDKVDKSG. Residues 145 to 156 are compositionally biased toward polar residues; the sequence is DSVTVAETTSGD. Over residues 157–167 the composition is skewed to low complexity; it reads NLTNYTNLPPN.

Belongs to the adhesin P1 family.

The sequence is that of Putative adhesin P1-like protein MPN_286 from Mycoplasma pneumoniae (strain ATCC 29342 / M129 / Subtype 1) (Mycoplasmoides pneumoniae).